A 473-amino-acid chain; its full sequence is MTNDRLFAGIARVLSVRPLAAALALLLTLPLIGVQAQSLRPSSGLRLPTPAASAGAAAGSASGQRQADFIVAVVNSEPITNSEVRTKLVRTEQQIIQQGSPLPPRRELVPQVLERLISDKAQLQLARSAGMRVDDNAVEAAVQTVARQNQISVDELRRRLKADGIAYSQFESDLRDELLVSRLRQREVDLRVTVTEQDIDQFLREQEGGTELSSLALNLAQILVAVPENATPGQVAALQAKAQQVMDKARGGADFAALANEFSDSPTRGTGGLMGLREADRYPPLFVESTKSLKVGGLAGPIRSGAGFHILKVIEKRQAGMPGSVITQTHARHILLRLSPKQGETAATEKLAALRKRILAGQADFAALARENSEDASAKQGGDLGWANPGMFVPEFEKVMNGLAPNQISDPLVSRFGVHLIQVLERREAQMSQRDQREMARNVLRGKKQEEAYVLWAQEVRGRAYVEYRESPQ.

Positions 1-36 (MTNDRLFAGIARVLSVRPLAAALALLLTLPLIGVQA) are cleaved as a signal peptide. 2 PpiC domains span residues 214–315 (SLAL…KVIE) and 326–425 (ITQT…QVLE).

The protein localises to the periplasm. It carries out the reaction [protein]-peptidylproline (omega=180) = [protein]-peptidylproline (omega=0). Functionally, chaperone involved in the correct folding and assembly of outer membrane proteins. Recognizes specific patterns of aromatic residues and the orientation of their side chains, which are found more frequently in integral outer membrane proteins. May act in both early periplasmic and late outer membrane-associated steps of protein maturation. The sequence is that of Chaperone SurA from Polaromonas sp. (strain JS666 / ATCC BAA-500).